The sequence spans 169 residues: Thaumatin-like pathogenesis-related protein 2 (169 aa).

Residues 1–21 form the signal peptide; sequence MATSSAVLFFLLAVFAAGASA.

Belongs to the thaumatin family.

Its function is as follows. Associated with resistance against stem rust fungi. This is Thaumatin-like pathogenesis-related protein 2 (RASTL-2) from Avena sativa (Oat).